A 1913-amino-acid polypeptide reads, in one-letter code: GREB1-like protein (1913 aa).

Residues 86–96 (MEDDEDEEEMS) show a composition bias toward acidic residues. Disordered stretches follow at residues 86–111 (MEDD…KPAP), 281–309 (NGTS…SPRP), 1097–1157 (EAER…TSSI), and 1179–1207 (DSLD…LAWS). The span at 289-301 (KSSSCSSTPSRPG) shows a compositional bias: low complexity. Over residues 1118-1157 (PQSNSSAVTGTSGSIMENGVSSSSTAGKPQQQLLTPTSSI) the composition is skewed to polar residues. Over residues 1187–1200 (SSTTSKPSSSSSSS) the composition is skewed to low complexity. The chain crosses the membrane as a helical span at residues 1832–1852 (GVFFSGLLLYLCDSFVGADLL).

The protein belongs to the GREB1 family. As to expression, expressed in the inner ear, with a high presence in the spiral ganglia, cochlear nerve bundles, and hair cells.

Its subcellular location is the membrane. Plays a major role in early metanephros and genital development. This chain is GREB1-like protein (Greb1l), found in Mus musculus (Mouse).